The chain runs to 128 residues: Cytochrome c-type biogenesis protein CcmE (128 aa).

Residues 1-8 (MQKRVRNR) are Cytoplasmic-facing. A helical; Signal-anchor for type II membrane protein membrane pass occupies residues 9 to 29 (LITIIICFCSAFLGISIILYN). Topologically, residues 30–128 (LEKNIVFFLP…KHDENYRPPQ (99 aa)) are periplasmic. Heme contacts are provided by His-120 and Tyr-124.

Belongs to the CcmE/CycJ family.

The protein localises to the cell inner membrane. Heme chaperone required for the biogenesis of c-type cytochromes. Transiently binds heme delivered by CcmC and transfers the heme to apo-cytochromes in a process facilitated by CcmF and CcmH. The polypeptide is Cytochrome c-type biogenesis protein CcmE (Rickettsia rickettsii (strain Iowa)).